The primary structure comprises 433 residues: 3-phosphoshikimate 1-carboxyvinyltransferase (433 aa).

3-phosphoshikimate-binding residues include Lys21, Ser22, and Arg26. A phosphoenolpyruvate-binding site is contributed by Lys21. Gly96 and Arg124 together coordinate phosphoenolpyruvate. 3-phosphoshikimate contacts are provided by Ser167, Ser168, Gln169, Ser195, Asp310, and Lys337. A phosphoenolpyruvate-binding site is contributed by Gln169. Asp310 serves as the catalytic Proton acceptor. Positions 341, 384, and 410 each coordinate phosphoenolpyruvate.

It belongs to the EPSP synthase family. As to quaternary structure, monomer.

Its subcellular location is the cytoplasm. It catalyses the reaction 3-phosphoshikimate + phosphoenolpyruvate = 5-O-(1-carboxyvinyl)-3-phosphoshikimate + phosphate. The protein operates within metabolic intermediate biosynthesis; chorismate biosynthesis; chorismate from D-erythrose 4-phosphate and phosphoenolpyruvate: step 6/7. Its function is as follows. Catalyzes the transfer of the enolpyruvyl moiety of phosphoenolpyruvate (PEP) to the 5-hydroxyl of shikimate-3-phosphate (S3P) to produce enolpyruvyl shikimate-3-phosphate and inorganic phosphate. The protein is 3-phosphoshikimate 1-carboxyvinyltransferase of Clostridium botulinum (strain Alaska E43 / Type E3).